The chain runs to 324 residues: Homeobox protein engrailed-2 (324 aa).

3 disordered regions span residues 1 to 59 (MEEK…HQHP), 89 to 174 (GGAR…VLKA), and 215 to 240 (DRPS…RPRT). Residues 89–110 (GGARGGEGGAGTTEGGGGGAGG) are compositionally biased toward gly residues. The homeobox DNA-binding region spans 235 to 294 (DKRPRTAFTAEQLQRLKAEFQTNRYLTEQRRQSLAQELSLNESQIKIWFQNKRAKIKKAT).

It belongs to the engrailed homeobox family. In terms of tissue distribution, cerebellar granule cells.

It localises to the nucleus. The polypeptide is Homeobox protein engrailed-2 (En2) (Mus musculus (Mouse)).